A 582-amino-acid polypeptide reads, in one-letter code: External alternative NAD(P)H-ubiquinone oxidoreductase B2, mitochondrial (582 aa).

Residues 1-38 constitute a mitochondrion transit peptide; that stretch reads MRNFSVFERFSKAFKDHPSLTRILVVSTISGGGLIAYS. Residue 60-90 participates in FAD binding; that stretch reads KVVLLGTGWAGTSFLKNLNNSQYEVQIISPR. 223-259 contacts NAD(+); that stretch reads LHFVVVGGGPTGVEFAAELHDFVTEDLVSLYPRAKGS. One can recognise an EF-hand domain in the interval 379-414; the sequence is KVMEDVSAIFSKADKDKSGTLTLKEFQEAMDDICVR. Ca(2+) is bound by residues Asp392, Asp394, Ser396, Thr398, and Glu403. The Microbody targeting signal signature appears at 573 to 582; it reads FIFGRDSSSI.

This sequence belongs to the NADH dehydrogenase family. FAD is required as a cofactor. Mostly expressed in seedlings and roots and, to a lower extent, in cotyledons, leaves, stems, buds and flowers.

Its subcellular location is the mitochondrion inner membrane. It localises to the peroxisome. It carries out the reaction a quinone + NADH + H(+) = a quinol + NAD(+). The enzyme catalyses a ubiquinone + NADH + H(+) = a ubiquinol + NAD(+). NADPH oxidase activity is stimulated by calcium ions. Its function is as follows. Alternative NADH-ubiquinone oxidoreductase which catalyzes the oxidation of mitochondrial NADH does not translocate protons across the inner mitochondrial membrane. Calcium-dependent NAD(P)H dehydrogenase; more efficient on NADH. Binds calcium ions. This Arabidopsis thaliana (Mouse-ear cress) protein is External alternative NAD(P)H-ubiquinone oxidoreductase B2, mitochondrial (NDB2).